The chain runs to 427 residues: MDFQLYSLGAALVFHEIFFPESSTAMALILAMGTYGAGYVARIVGAFIFGKMGDRIGRKKVLFITITMMGICTTLIGVLPTYAQIGVFAPILLVTLRIIQGLGAGAEISGAGTMLAEYAPKGKRGIISSFVAMGTNCGTLSATAIWAFMFFILSKEELLAWGWRIPFLASVVVMVFAIWLRMNLKESPVFEKVNDSNQPTAKPAPAGSMFQSKSFWLATGLRFGQAGNSGLIQTFLAGYLVQTLLFNKAIPTDALMISSILGFMTIPFLGWLSDKIGRRIPYIIMNTSAIVLAWPMLSIIVDKSYAPSTIMVALIVIHNCAVLGLFALENITMAEMFGCKNRFTRMAISKEIGGLIASGFGPILAGIFCTMTESWYPIAIMIMAYSVIGLISALKMPEVKDRDLSALEDAAEDQPRVVRAAQPSRSL.

Residues 1 to 7 (MDFQLYS) lie on the Cytoplasmic side of the membrane. A run of 2 helical transmembrane segments spans residues 8-28 (LGAA…AMAL) and 29-49 (ILAM…AFIF). Residues 50-74 (GKMGDRIGRKKVLFITITMMGICTT) lie on the Cytoplasmic side of the membrane. A helical transmembrane segment spans residues 75–95 (LIGVLPTYAQIGVFAPILLVT). Residues 96-97 (LR) are Periplasmic-facing. A helical transmembrane segment spans residues 98 to 118 (IIQGLGAGAEISGAGTMLAEY). The Cytoplasmic portion of the chain corresponds to 119-132 (APKGKRGIISSFVA). Residues 133-153 (MGTNCGTLSATAIWAFMFFIL) form a helical membrane-spanning segment. The Periplasmic portion of the chain corresponds to 154–157 (SKEE). Residues 158–178 (LLAWGWRIPFLASVVVMVFAI) traverse the membrane as a helical segment. At 179-225 (WLRMNLKESPVFEKVNDSNQPTAKPAPAGSMFQSKSFWLATGLRFGQ) the chain is on the cytoplasmic side. The chain crosses the membrane as a helical span at residues 226–246 (AGNSGLIQTFLAGYLVQTLLF). The Periplasmic portion of the chain corresponds to 247–251 (NKAIP). The chain crosses the membrane as a helical span at residues 252–272 (TDALMISSILGFMTIPFLGWL). At 273-279 (SDKIGRR) the chain is on the cytoplasmic side. Residues 280 to 300 (IPYIIMNTSAIVLAWPMLSII) traverse the membrane as a helical segment. The Periplasmic portion of the chain corresponds to 301 to 307 (VDKSYAP). The helical transmembrane segment at 308 to 328 (STIMVALIVIHNCAVLGLFAL) threads the bilayer. Residues 329–351 (ENITMAEMFGCKNRFTRMAISKE) lie on the Cytoplasmic side of the membrane. The chain crosses the membrane as a helical span at residues 352–372 (IGGLIASGFGPILAGIFCTMT). Position 373 (Glu373) is a topological domain, periplasmic. The chain crosses the membrane as a helical span at residues 374-394 (SWYPIAIMIMAYSVIGLISAL). Residues 395 to 427 (KMPEVKDRDLSALEDAAEDQPRVVRAAQPSRSL) are Cytoplasmic-facing.

Belongs to the major facilitator superfamily. Metabolite:H+ Symporter (MHS) family (TC 2.A.1.6) family.

Its subcellular location is the cell inner membrane. Functionally, when overexpressed in human HEK-293 cells forms an inward rectifying potassium channel. This chain is Putative transporter YdfJ (ydfJ), found in Escherichia coli (strain K12).